Here is a 558-residue protein sequence, read N- to C-terminus: Arginine--tRNA ligase (558 aa).

Positions Pro119–His129 match the 'HIGH' region motif.

The protein belongs to the class-I aminoacyl-tRNA synthetase family. In terms of assembly, monomer.

Its subcellular location is the cytoplasm. The enzyme catalyses tRNA(Arg) + L-arginine + ATP = L-arginyl-tRNA(Arg) + AMP + diphosphate. In Lactobacillus johnsonii (strain CNCM I-12250 / La1 / NCC 533), this protein is Arginine--tRNA ligase.